Consider the following 134-residue polypeptide: MAQSLALSLLILVLAFGIPRTQGSDGGAQDCCLKYSQRKIPAKVVRSYRKQEPSLGCSIPAILFLPRKRSQAELCADPKELWVQQLMQHLDKTPSPQKPAQGCRKDRGASKTGKKGKGSKGCKRTERSQTPKGP.

The first 23 residues, 1-23 (MAQSLALSLLILVLAFGIPRTQG), serve as a signal peptide directing secretion. 3 cysteine pairs are disulfide-bonded: cysteine 31/cysteine 57, cysteine 32/cysteine 75, and cysteine 103/cysteine 122. Positions 88-134 (QHLDKTPSPQKPAQGCRKDRGASKTGKKGKGSKGCKRTERSQTPKGP) are disordered. A C-terminal basic extension region spans residues 98 to 134 (KPAQGCRKDRGASKTGKKGKGSKGCKRTERSQTPKGP). Over residues 112–122 (TGKKGKGSKGC) the composition is skewed to basic residues. A compositionally biased stretch (basic and acidic residues) spans 123 to 134 (KRTERSQTPKGP).

It belongs to the intercrine beta (chemokine CC) family. In terms of assembly, monomer. Binds to CCR7. Interacts with PDPN; relocalizes PDPN to the basolateral membrane. Interacts with TNFAIP6 (via Link domain). Interacts with GPR174. As to expression, highly expressed in high endothelial venules of lymph nodes, spleen and appendix. Intermediate levels found in small intestine, thyroid gland and trachea. Low level expression in thymus, bone marrow, liver, and pancreas. Also found in tonsil, fetal heart and fetal spleen.

Its subcellular location is the secreted. In terms of biological role, inhibits hemopoiesis and stimulates chemotaxis. Chemotactic in vitro for thymocytes and activated T-cells, but not for B-cells, macrophages, or neutrophils. Shows preferential activity towards naive T-cells. May play a role in mediating homing of lymphocytes to secondary lymphoid organs. Binds to atypical chemokine receptor ACKR4 and mediates the recruitment of beta-arrestin (ARRB1/2) to ACKR4. The protein is C-C motif chemokine 21 (CCL21) of Homo sapiens (Human).